Here is a 65-residue protein sequence, read N- to C-terminus: Large ribosomal subunit protein bL35 (65 aa).

Residues 1-26 form a disordered region; it reads MPKIKTVRGAAKRFKKTASGGFKRKQ. Over residues 10-26 the composition is skewed to basic residues; the sequence is AAKRFKKTASGGFKRKQ.

Belongs to the bacterial ribosomal protein bL35 family.

The sequence is that of Large ribosomal subunit protein bL35 from Actinobacillus succinogenes (strain ATCC 55618 / DSM 22257 / CCUG 43843 / 130Z).